A 910-amino-acid chain; its full sequence is DNA mismatch repair protein MutS (910 aa).

The span at 1 to 11 shows a compositional bias: basic and acidic residues; it reads MEAKVEEKEPE. The interval 1 to 21 is disordered; it reads MEAKVEEKEPEPVENAGPDAP. 658-665 serves as a coordination point for ATP; sequence GPNMGGKS.

The protein belongs to the DNA mismatch repair MutS family.

Functionally, this protein is involved in the repair of mismatches in DNA. It is possible that it carries out the mismatch recognition step. This protein has a weak ATPase activity. This chain is DNA mismatch repair protein MutS, found in Brucella abortus (strain 2308).